The following is a 204-amino-acid chain: dTTP/UTP pyrophosphatase (204 aa).

The active-site Proton acceptor is Asp-68.

This sequence belongs to the Maf family. YhdE subfamily. A divalent metal cation serves as cofactor.

Its subcellular location is the cytoplasm. The catalysed reaction is dTTP + H2O = dTMP + diphosphate + H(+). It carries out the reaction UTP + H2O = UMP + diphosphate + H(+). In terms of biological role, nucleoside triphosphate pyrophosphatase that hydrolyzes dTTP and UTP. May have a dual role in cell division arrest and in preventing the incorporation of modified nucleotides into cellular nucleic acids. The sequence is that of dTTP/UTP pyrophosphatase from Thermotoga maritima (strain ATCC 43589 / DSM 3109 / JCM 10099 / NBRC 100826 / MSB8).